The primary structure comprises 831 residues: Thymine dioxygenase JBP1-B (831 aa).

A thymine dioxygenase region spans residues Val-80–Ala-282. The Fe cation site is built by His-207, Asp-209, and His-257. Arg-273 contacts 2-oxoglutarate. The segment at Leu-409 to Ala-578 is DNA-binding JBP1 domain.

This sequence belongs to the TET family. JBP1 subfamily. As to quaternary structure, monomer. Binds to DNA as a monomer. The cofactor is Fe(2+).

Its subcellular location is the nucleus. The catalysed reaction is thymine + 2-oxoglutarate + O2 = 5-hydroxymethyluracil + succinate + CO2. Its function is as follows. Dioxygenase that catalyzes the first step of DNA base J (beta-d-glucosyl-HOMedU) biosynthesis by converting thymine to 5-hydroxymethyluracil (HOMedU). DNA base J is a hypermodified thymidine residue found in the genome of kinetoplastid parasites, which is localized primarily to repetitive DNA, namely the telomeres, and is implicated in the regulation of antigenic variation. Also specifically binds to base J-containing DNA (J-DNA). Involved in propagation and maintenance of DNA base J synthesis initiated by JBP2 by specifically binding already synthesized DNA base J and propagating J synthesis. Thymine dioxygenase activity and J-DNA-binding are independent functions. The chain is Thymine dioxygenase JBP1-B (JBP1B) from Trypanosoma cruzi (strain CL Brener).